The sequence spans 451 residues: tRNA-2-methylthio-N(6)-dimethylallyladenosine synthase (451 aa).

The 116-residue stretch at 1 to 116 folds into the MTTase N-terminal domain; sequence MTYFFETYGC…LPQIFDEIKA (116 aa). [4Fe-4S] cluster is bound by residues C10, C46, C79, C162, C166, and C169. One can recognise a Radical SAM core domain in the interval 148–384; it reads SPKSFQSYVP…IDLQLKITAK (237 aa). In terms of domain architecture, TRAM spans 387–451; the sequence is KAKLGKKVDI…KGKTFRANLN (65 aa).

It belongs to the methylthiotransferase family. MiaB subfamily. As to quaternary structure, monomer. [4Fe-4S] cluster serves as cofactor.

It is found in the cytoplasm. The enzyme catalyses N(6)-dimethylallyladenosine(37) in tRNA + (sulfur carrier)-SH + AH2 + 2 S-adenosyl-L-methionine = 2-methylsulfanyl-N(6)-dimethylallyladenosine(37) in tRNA + (sulfur carrier)-H + 5'-deoxyadenosine + L-methionine + A + S-adenosyl-L-homocysteine + 2 H(+). Its function is as follows. Catalyzes the methylthiolation of N6-(dimethylallyl)adenosine (i(6)A), leading to the formation of 2-methylthio-N6-(dimethylallyl)adenosine (ms(2)i(6)A) at position 37 in tRNAs that read codons beginning with uridine. The protein is tRNA-2-methylthio-N(6)-dimethylallyladenosine synthase of Treponema denticola (strain ATCC 35405 / DSM 14222 / CIP 103919 / JCM 8153 / KCTC 15104).